The chain runs to 177 residues: MAGSRLETVGSVFSRTRDLMRAGVLKEKPLWYDIYKAFPPLREPVFRRPRLRYGKAKADIQDIFYQEDQIRAKFFATYGSGQKAFDLFNPNFKSTCQRFVEKYTELQNLGETDEEKLFVETGKALLAEGIILRRVREARTVSVRLQASSEGHEPQEDDDLAQRGQVKQEPETAPSPP.

N-acetylalanine is present on Ala-2. Lys-83 carries the post-translational modification N6-succinyllysine. N6-acetyllysine is present on Lys-102. The interval 145–177 is disordered; it reads LQASSEGHEPQEDDDLAQRGQVKQEPETAPSPP.

It belongs to the mitochondrion-specific ribosomal protein mS23 family. In terms of assembly, component of the mitochondrial ribosome small subunit (28S) which comprises a 12S rRNA and about 30 distinct proteins.

Its subcellular location is the mitochondrion. The sequence is that of Small ribosomal subunit protein mS23 from Mus musculus (Mouse).